Reading from the N-terminus, the 255-residue chain is Hydroxyacylglutathione hydrolase (255 aa).

The Zn(2+) site is built by histidine 53, histidine 55, aspartate 57, histidine 58, histidine 110, aspartate 127, and histidine 165.

This sequence belongs to the metallo-beta-lactamase superfamily. Glyoxalase II family. In terms of assembly, monomer. It depends on Zn(2+) as a cofactor.

The enzyme catalyses an S-(2-hydroxyacyl)glutathione + H2O = a 2-hydroxy carboxylate + glutathione + H(+). Its pathway is secondary metabolite metabolism; methylglyoxal degradation; (R)-lactate from methylglyoxal: step 2/2. Thiolesterase that catalyzes the hydrolysis of S-D-lactoyl-glutathione to form glutathione and D-lactic acid. The polypeptide is Hydroxyacylglutathione hydrolase (Xanthomonas axonopodis pv. citri (strain 306)).